Consider the following 190-residue polypeptide: Dynein axonemal light chain 1 (190 aa).

N-acetylalanine is present on A2. 4 LRR repeats span residues 49–70 (NCEK…NGLK), 71–92 (NLRI…EAVG), 94–115 (TLEE…HVMK), and 116–137 (KLKI…LKLA). S56 carries the phosphoserine modification. One can recognise an LRRCT domain in the interval 150–190 (NPLEEKHSAEGNWIDEATKRVPKLKKLDGTPVIKEDEEEES).

Belongs to the dynein light chain LC1-type family. Interacts with ZMYND10 (via C-terminus). Interacts with DNAH5, a outer arm dynein heavy chain. Interacts with tubulin located within the A-tubule of the outer doublets in a ATP-independent manner. In terms of tissue distribution, expressed in the respiratory epithelium of the upper airways and the ependymal cells lining the brain ventricles.

It localises to the cytoplasm. It is found in the cytoskeleton. Its subcellular location is the cilium axoneme. In terms of biological role, part of the multisubunit axonemal ATPase complexes that generate the force for cilia motility and govern beat frequency. Component of the outer arm dynein (ODA). May be involved in a mechanosensory feedback mechanism controlling ODA activity based on external conformational cues by tethering the outer arm dynein heavy chain (DNAH5) to the microtubule within the axoneme. Important for ciliary function in the airways and for the function of the cilia that produce the nodal flow essential for the determination of the left-right asymmetry. In Mus musculus (Mouse), this protein is Dynein axonemal light chain 1 (Dnal1).